We begin with the raw amino-acid sequence, 102 residues long: Small ribosomal subunit protein uS10 (102 aa).

Belongs to the universal ribosomal protein uS10 family. Part of the 30S ribosomal subunit.

Involved in the binding of tRNA to the ribosomes. The chain is Small ribosomal subunit protein uS10 from Tropheryma whipplei (strain TW08/27) (Whipple's bacillus).